Reading from the N-terminus, the 495-residue chain is Cytochrome P450 monooxygenase aneF (495 aa).

The helical transmembrane segment at 1–21 (MIAGLVLVVLLTKYLQRVFLH) threads the bilayer. The N-linked (GlcNAc...) asparagine glycan is linked to asparagine 47. Heme is bound at residue cysteine 437.

Belongs to the cytochrome P450 family. Requires heme as cofactor.

The protein resides in the membrane. The enzyme catalyses dauca-4,7-diene + 3 reduced [NADPH--hemoprotein reductase] + 3 O2 = asperaculane D + 3 oxidized [NADPH--hemoprotein reductase] + 4 H2O + 4 H(+). The protein operates within secondary metabolite biosynthesis. Its function is as follows. Cytochrome P450 monooxygenase; part of the gene cluster that mediates the biosynthesis of aculenes, a unique type of norsesquiterpenes that contain a nordaucane skeleton linked to an L-proline moiety and are of mixed biosynthetic origin. The pathway begins with the synthesis of dauca-4,7-diene by the terpene cyclase aneC using farnesyl pyrophosphate (FPP) as substrate. The cytochrome P450 monooxygenase aneF then performs the initial oxidation at C-12 of dauca-4,7-diene to yield asperaculane D. Asperaculane D is substrate of the cytochrome P450 monooxygenase aneD for C-10 hydroxylation to yield asperaculane E. The cytochrome P450 monooxygenase aneG then converts asperaculane E into aculene D via C-2 oxidation. The monomodular nonribosomal peptide synthtase aneB adenylates L-proline and the thiohydrolase aneE transfers this activated L-proline derivative to aculenes D and C to produce respectively aculenes B and A. The dioxygenase aneA converts aculene D into aculene C, and aculene B into aculene A by introducing the 5,6-alkene moiety. Asperculanes A, B, C and F, as well as 14-prolyl asperculane C, might be shunt products of the pathway. This chain is Cytochrome P450 monooxygenase aneF, found in Aspergillus aculeatus (strain ATCC 16872 / CBS 172.66 / WB 5094).